The following is a 399-amino-acid chain: Large envelope protein (399 aa).

Met-1 is modified (N-acetylmethionine). Gly-2 carries N-myristoyl glycine; by host lipidation. Residues 2 to 118 are pre-S1; it reads GLSWTVPLEW…PPLRDTHPQA (117 aa). Residues 2-173 form a pre-S region; the sequence is GLSWTVPLEW…FSRIGDPAPN (172 aa). Residues 2-180 lie on the Virion surface; in external conformation side of the membrane; it reads GLSWTVPLEW…APNMEGITSG (179 aa). Residues 2–252 are Intravirion; in internal conformation-facing; sequence GLSWTVPLEW…PGYRWMCLRR (251 aa). An N-linked (GlcNAc...) asparagine glycan is attached at Ser-4. The disordered stretch occupies residues 85–109; sequence KTLPADPPPASTNRQSGRQPTPITP. A compositionally biased stretch (polar residues) spans 95–105; it reads STNRQSGRQPT. The pre-S2 stretch occupies residues 119–173; it reads MQWNSTTFHQALQDPRVRGLYFPAGGSSSGTVNPVPTTASLISSIFSRIGDPAPN. The chain crosses the membrane as a helical span at residues 181-201; the sequence is FLGPLLVLQAGFFLLTKILTI. The Intravirion; in external conformation portion of the chain corresponds to 202–252; the sequence is PQSLDSWWTSLNFLGGAPVCLGQNSQSPTSNHSPTSCPPICPGYRWMCLRR. The helical transmembrane segment at 253 to 273 threads the bilayer; it reads FIIFLFILLLCLIFLLVLLGY. Over 274-347 the chain is Virion surface; it reads QGMLPVCPLI…WASARFSWLS (74 aa). Asn-319 carries N-linked (GlcNAc...) asparagine; by host glycosylation. The helical transmembrane segment at 348–368 threads the bilayer; sequence LLVPFVQWFAGLSPTVWLSVI. Residues 369-374 are Intravirion-facing; that stretch reads WMMWYW. The chain crosses the membrane as a helical span at residues 375–397; that stretch reads GPSLYNILSPFIPLLPIFFCLWV. The Virion surface segment spans residues 398–399; sequence YI.

Belongs to the orthohepadnavirus major surface antigen family. In terms of assembly, in its internal form (Li-HBsAg), interacts with the capsid protein and with the isoform S. Interacts with host chaperone CANX. Associates with host chaperone CANX through its pre-S2 N glycan; this association may be essential for isoform M proper secretion. As to quaternary structure, interacts with isoform L. Interacts with the antigens of satellite virus HDV (HDVAgs); this interaction is required for encapsidation of HDV genomic RNA. Post-translationally, isoform M is N-terminally acetylated by host at a ratio of 90%, and N-glycosylated by host at the pre-S2 region. Myristoylated.

The protein resides in the virion membrane. Its function is as follows. The large envelope protein exists in two topological conformations, one which is termed 'external' or Le-HBsAg and the other 'internal' or Li-HBsAg. In its external conformation the protein attaches the virus to cell receptors and thereby initiating infection. This interaction determines the species specificity and liver tropism. This attachment induces virion internalization predominantly through caveolin-mediated endocytosis. The large envelope protein also assures fusion between virion membrane and endosomal membrane. In its internal conformation the protein plays a role in virion morphogenesis and mediates the contact with the nucleocapsid like a matrix protein. Functionally, the middle envelope protein plays an important role in the budding of the virion. It is involved in the induction of budding in a nucleocapsid independent way. In this process the majority of envelope proteins bud to form subviral lipoprotein particles of 22 nm of diameter that do not contain a nucleocapsid. The polypeptide is Large envelope protein (Hepatitis B virus genotype E (isolate Cote d'Ivoire/ABI-129/2003) (HBV-E)).